Consider the following 340-residue polypeptide: Guanine nucleotide-binding protein G(I)/G(S)/G(T) subunit beta-1 (340 aa).

WD repeat units follow at residues 53–83 (GHLA…IVWD), 95–125 (LRSS…SIYS), 141–170 (GHTG…ALWD), 182–212 (GHTG…KLWD), 224–254 (GHES…RLFD), 268–298 (NIIC…NVWD), and 310–340 (GHDN…KIWN).

It belongs to the WD repeat G protein beta family. In terms of assembly, g proteins are composed of 3 units, alpha, beta and gamma.

In terms of biological role, guanine nucleotide-binding proteins (G proteins) are involved as a modulator or transducer in various transmembrane signaling systems. The beta and gamma chains are required for the GTPase activity, for replacement of GDP by GTP, and for G protein-effector interaction. This chain is Guanine nucleotide-binding protein G(I)/G(S)/G(T) subunit beta-1 (GBETA1), found in Homarus americanus (American lobster).